The chain runs to 341 residues: UDP-3-O-(3-hydroxymyristoyl)glucosamine N-acyltransferase (341 aa).

Histidine 239 (proton acceptor) is an active-site residue.

It belongs to the transferase hexapeptide repeat family. LpxD subfamily. Homotrimer.

The enzyme catalyses a UDP-3-O-[(3R)-3-hydroxyacyl]-alpha-D-glucosamine + a (3R)-hydroxyacyl-[ACP] = a UDP-2-N,3-O-bis[(3R)-3-hydroxyacyl]-alpha-D-glucosamine + holo-[ACP] + H(+). It carries out the reaction UDP-3-O-[(3R)-3-hydroxytetradecanoyl]-alpha-D-glucosamine + (3R)-hydroxytetradecanoyl-[ACP] = UDP-2-N,3-O-bis[(3R)-3-hydroxytetradecanoyl]-alpha-D-glucosamine + holo-[ACP] + H(+). It functions in the pathway glycolipid biosynthesis; lipid IV(A) biosynthesis; lipid IV(A) from (3R)-3-hydroxytetradecanoyl-[acyl-carrier-protein] and UDP-N-acetyl-alpha-D-glucosamine: step 3/6. In terms of biological role, catalyzes the N-acylation of UDP-3-O-(hydroxytetradecanoyl)glucosamine using 3-hydroxytetradecanoyl-ACP as the acyl donor. Is involved in the biosynthesis of lipid A, a phosphorylated glycolipid that anchors the lipopolysaccharide to the outer membrane of the cell. This Shigella dysenteriae serotype 1 (strain Sd197) protein is UDP-3-O-(3-hydroxymyristoyl)glucosamine N-acyltransferase.